Consider the following 157-residue polypeptide: Ribonuclease H (157 aa).

Residues 1–142 form the RNase H type-1 domain; that stretch reads MKKKIKIFID…CDFLAKISAK (142 aa). Mg(2+)-binding residues include D10, E48, D70, and D134.

This sequence belongs to the RNase H family. In terms of assembly, monomer. Requires Mg(2+) as cofactor.

The protein resides in the cytoplasm. The enzyme catalyses Endonucleolytic cleavage to 5'-phosphomonoester.. Functionally, endonuclease that specifically degrades the RNA of RNA-DNA hybrids. The protein is Ribonuclease H of Wigglesworthia glossinidia brevipalpis.